A 473-amino-acid polypeptide reads, in one-letter code: Bestrophin-4 (473 aa).

Residues 1–31 are Cytoplasmic-facing; it reads MTVSYTLKVAEARFGGFSGLLLRWRGSIYKL. Alanine 10 serves as a coordination point for Ca(2+). A helical transmembrane segment spans residues 32–51; the sequence is LYKEFLLFGALYAVLSITYR. Residues 52–60 are Extracellular-facing; the sequence is LLLTQEQRY. The chain crosses the membrane as a helical span at residues 61 to 82; sequence VYAQVARYCNRSADLIPLSFVL. At 83 to 237 the chain is on the cytoplasmic side; it reads GFYVTLVVNR…DWISIPLVYT (155 aa). A helical transmembrane segment spans residues 238–255; sequence QVVTIAVYSFFALSLVGR. The Extracellular segment spans residues 256–289; the sequence is QFVEPEAGAAKPQKLLKPGQEPAPALGDPDMYVP. A helical membrane pass occupies residues 290–303; that stretch reads LTTLLQFFFYAGWL. Over 304–473 the chain is Cytoplasmic; that stretch reads KVAEQIINPF…AESGDEALEP (170 aa). Residues glutamine 308, asparagine 311, aspartate 316, and aspartate 319 each contribute to the Ca(2+) site. Disordered regions lie at residues 379–408 and 428–473; these read TFNLRMSDDPEQSLQVEASPGSGRPAPAAQ and RNFG…ALEP. The segment covering 396–407 has biased composition (low complexity); sequence ASPGSGRPAPAA. The segment covering 445–461 has biased composition (basic and acidic residues); it reads FRAEEGGDPEAAARIEE. The span at 462–473 shows a compositional bias: acidic residues; the sequence is ESAESGDEALEP.

This sequence belongs to the anion channel-forming bestrophin (TC 1.A.46) family. Calcium-sensitive chloride channel subfamily. Predominantly found in colon and the weakly in fetal brain, spinal cord, retina, lung, trachea, testis and placenta.

The protein resides in the cell membrane. The enzyme catalyses chloride(in) = chloride(out). The catalysed reaction is hydrogencarbonate(in) = hydrogencarbonate(out). In terms of biological role, ligand-gated anion channel that allows the movement of anions across cell membranes when activated by Calcium (Ca2+). Mediates the movement of hydrogencarbonate and chloride. In Homo sapiens (Human), this protein is Bestrophin-4.